A 68-amino-acid polypeptide reads, in one-letter code: U19-ctenitoxin-Pn1a (68 aa).

Q1 is subject to Pyrrolidone carboxylic acid. Cystine bridges form between C8-C19, C13-C28, C18-C51, C38-C59, and C53-C65.

In terms of tissue distribution, expressed by the venom gland.

Its subcellular location is the secreted. In terms of biological role, non-toxic to mice and insects. The polypeptide is U19-ctenitoxin-Pn1a (Phoneutria nigriventer (Brazilian armed spider)).